A 206-amino-acid polypeptide reads, in one-letter code: 2,3-bisphosphoglycerate-dependent phosphoglycerate mutase (206 aa).

Substrate contacts are provided by residues 9-16 (RHGQSEWN), 22-23 (TG), Arg-61, 88-91 (ERDY), Lys-99, 115-116 (RR), and 159-160 (GN). His-10 serves as the catalytic Tele-phosphohistidine intermediate. The Proton donor/acceptor role is filled by Glu-88.

Belongs to the phosphoglycerate mutase family. BPG-dependent PGAM subfamily. Homodimer.

It carries out the reaction (2R)-2-phosphoglycerate = (2R)-3-phosphoglycerate. It functions in the pathway carbohydrate degradation; glycolysis; pyruvate from D-glyceraldehyde 3-phosphate: step 3/5. Catalyzes the interconversion of 2-phosphoglycerate and 3-phosphoglycerate. This chain is 2,3-bisphosphoglycerate-dependent phosphoglycerate mutase, found in Bartonella quintana (strain Toulouse) (Rochalimaea quintana).